A 596-amino-acid polypeptide reads, in one-letter code: Aspartate--tRNA(Asp/Asn) ligase (596 aa).

Glu-175 is an L-aspartate binding site. Residues 199 to 202 (QQYK) are aspartate. L-aspartate is bound by residues Arg-221 and His-454. Position 221 to 223 (221 to 223 (RDE)) interacts with ATP. Residue Glu-488 coordinates ATP. Arg-495 contributes to the L-aspartate binding site. ATP is bound at residue 540 to 543 (GIDR).

This sequence belongs to the class-II aminoacyl-tRNA synthetase family. Type 1 subfamily. As to quaternary structure, homodimer.

It is found in the cytoplasm. The catalysed reaction is tRNA(Asx) + L-aspartate + ATP = L-aspartyl-tRNA(Asx) + AMP + diphosphate. Functionally, aspartyl-tRNA synthetase with relaxed tRNA specificity since it is able to aspartylate not only its cognate tRNA(Asp) but also tRNA(Asn). Reaction proceeds in two steps: L-aspartate is first activated by ATP to form Asp-AMP and then transferred to the acceptor end of tRNA(Asp/Asn). In Rhizobium johnstonii (strain DSM 114642 / LMG 32736 / 3841) (Rhizobium leguminosarum bv. viciae), this protein is Aspartate--tRNA(Asp/Asn) ligase.